Consider the following 261-residue polypeptide: Syntaxin-7 (261 aa).

Position 2 is an N-acetylserine (Ser-2). Residues 2-238 (SYTPGIGGDS…DYQRKSRKTL (237 aa)) lie on the Cytoplasmic side of the membrane. Residue Thr-4 is modified to Phosphothreonine. The residue at position 45 (Ser-45) is a Phosphoserine. A coiled-coil region spans residues 47–68 (ELRQLLQQKQQYTNQLAKETDK). Phosphoserine is present on Ser-75. Position 79 is a phosphothreonine (Thr-79). Residues Ser-125, Ser-126, Ser-129, and Ser-205 each carry the phosphoserine modification. Residues 128-148 (VSGGFPEDSSKEKNLVSWESQ) are disordered. The t-SNARE coiled-coil homology domain occupies 165-227 (LRLIHERESS…QQANQQLSRA (63 aa)). A helical; Anchor for type IV membrane protein transmembrane segment spans residues 239 to 259 (CIIIFILVVRIVIICLIVWGL). The Vesicular segment spans residues 260 to 261 (KG).

It belongs to the syntaxin family. In terms of assembly, interacts with VPS11, VPS16 and VPS18. Interacts with VPS33A. Forms a SNARE complex with VTI1B, STX8 and VAMP8 which functions in the homotypic fusion of late endosomes. Component of the SNARE complex composed of STX7, STX8, VAMP7 and VTI1B that is required for heterotypic fusion of late endosomes with lysosomes. Interacts with TPC1.

Its subcellular location is the early endosome membrane. May be involved in protein trafficking from the plasma membrane to the early endosome (EE) as well as in homotypic fusion of endocytic organelles. Mediates the endocytic trafficking from early endosomes to late endosomes and lysosomes. In Mus musculus (Mouse), this protein is Syntaxin-7 (Stx7).